The following is a 370-amino-acid chain: MNEMTHRTKTRPVKVGNLTIGGNNELIIQSMTTTKTHDVEATVAEIKRLEEAGCQVVRVAVPDERAANAIADIKKQINIPLVADIHFDYRLALKAIEGGIDKVRINPGNIGRRHKVEAVVNAAKERGIPIRIGVNAGSLERHILEKYGYPTADGMVESALHHIKILEDLDFHDIIVSMKASDVNLAIEAYEKAARAFDYPLHLGITESGTLFAGTVKSAAGLGAILSKGIGNTLRISLSADPVEEVKVARELLKSFGLASNAATLISCPTCGRIEIDLISIANEVEEYISTLQVPIKVAVLGCAVNGPGEAREADIGIAGARGEGLLFRKGQVVRKVPEEIMVEELKKEIDVIAAEMAAEREKEKETQEQ.

Cysteine 268, cysteine 271, cysteine 303, and glutamate 310 together coordinate [4Fe-4S] cluster.

It belongs to the IspG family. [4Fe-4S] cluster is required as a cofactor.

It catalyses the reaction (2E)-4-hydroxy-3-methylbut-2-enyl diphosphate + oxidized [flavodoxin] + H2O + 2 H(+) = 2-C-methyl-D-erythritol 2,4-cyclic diphosphate + reduced [flavodoxin]. It functions in the pathway isoprenoid biosynthesis; isopentenyl diphosphate biosynthesis via DXP pathway; isopentenyl diphosphate from 1-deoxy-D-xylulose 5-phosphate: step 5/6. In terms of biological role, converts 2C-methyl-D-erythritol 2,4-cyclodiphosphate (ME-2,4cPP) into 1-hydroxy-2-methyl-2-(E)-butenyl 4-diphosphate. This chain is 4-hydroxy-3-methylbut-2-en-1-yl diphosphate synthase (flavodoxin), found in Bacillus cereus (strain AH187).